The primary structure comprises 361 residues: Queuine tRNA-ribosyltransferase (361 aa).

Asp-92 (proton acceptor) is an active-site residue. Residues Asp-92–Phe-96, Asp-146, Gln-189, and Gly-216 contribute to the substrate site. Residues Gly-247–Asp-253 form an RNA binding region. The active-site Nucleophile is the Asp-266. The RNA binding; important for wobble base 34 recognition stretch occupies residues Thr-271–Arg-275. Residues Cys-304, Cys-306, Cys-309, and His-335 each coordinate Zn(2+).

The protein belongs to the queuine tRNA-ribosyltransferase family. As to quaternary structure, homodimer. Within each dimer, one monomer is responsible for RNA recognition and catalysis, while the other monomer binds to the replacement base PreQ1. It depends on Zn(2+) as a cofactor.

It carries out the reaction 7-aminomethyl-7-carbaguanine + guanosine(34) in tRNA = 7-aminomethyl-7-carbaguanosine(34) in tRNA + guanine. It participates in tRNA modification; tRNA-queuosine biosynthesis. In terms of biological role, catalyzes the base-exchange of a guanine (G) residue with the queuine precursor 7-aminomethyl-7-deazaguanine (PreQ1) at position 34 (anticodon wobble position) in tRNAs with GU(N) anticodons (tRNA-Asp, -Asn, -His and -Tyr). Catalysis occurs through a double-displacement mechanism. The nucleophile active site attacks the C1' of nucleotide 34 to detach the guanine base from the RNA, forming a covalent enzyme-RNA intermediate. The proton acceptor active site deprotonates the incoming PreQ1, allowing a nucleophilic attack on the C1' of the ribose to form the product. After dissociation, two additional enzymatic reactions on the tRNA convert PreQ1 to queuine (Q), resulting in the hypermodified nucleoside queuosine (7-(((4,5-cis-dihydroxy-2-cyclopenten-1-yl)amino)methyl)-7-deazaguanosine). The sequence is that of Queuine tRNA-ribosyltransferase from Rickettsia massiliae (strain Mtu5).